Reading from the N-terminus, the 589-residue chain is ATP-dependent ubiquitin transferase-like protein Cap2 (589 aa).

Cys-13 participates in a covalent cross-link: Glycyl cysteine dithioester (Cys-Gly) (interchain with G-Cter in DncV). Lys-77 participates in a covalent cross-link: Glycyl lysine isopeptide (Lys-Gly) (interchain with G-Cter in DncV). Cys-91 (for E2-like domain) is an active-site residue. Residues Lys-305, Lys-387, and Lys-484 each participate in a glycyl lysine isopeptide (Lys-Gly) (interchain with G-Cter in DncV) cross-link. Cys-493 is covalently cross-linked (Glycyl cysteine dithioester (Cys-Gly) (interchain with G-Cter in DncV)). Active-site for E1-like domain residues include Cys-493, Cys-496, and Cys-513. Residue Cys-513 forms a Glycyl cysteine dithioester (Cys-Gly) (interchain with G-Cter in DncV) linkage. Lys-523 participates in a covalent cross-link: Glycyl lysine isopeptide (Lys-Gly) (interchain with G-Cter in DncV).

This sequence in the C-terminal section; belongs to the HesA/MoeB/ThiF family. As to quaternary structure, a Cap2 dimer is bound on either side by a DncV monomer. Post-translationally, conjugated to DncV via 5 different Lys residues and 3 Cys residues.

Functionally, CD-NTase priming component of a CBASS antiviral system. CBASS (cyclic oligonucleotide-based antiphage signaling system) provides immunity against bacteriophages. The CD-NTase protein (DncV) synthesizes cyclic nucleotides in response to infection; these serve as specific second messenger signals. The signals activate a diverse range of effectors, leading to bacterial cell death and thus abortive phage infection. A type II-A(GA) CBASS system. Conjugates DncV to itself in vitro and to other cellular proteins in vivo; conjugation requires ATP. This primes DncV, upon phage infection CdnA activates and makes cyclic nucleotides. Its function is as follows. Protects E.coli against phage infection. When capV and dncV are introduced in E.coli MG1655 there is 1000-fold protection against phage P1; protection against other phage (T2, T4, T5, T6 and lambda-vir) requires the 2 subsequent genes. In another paper the capV-dncV-cap2-cap3 operon gives 10(4)-10(5)-fold protection against phages lambda, T2, T4 and T6, about 1000-fold protection against P1 and 10-fold protection against T5. The chain is ATP-dependent ubiquitin transferase-like protein Cap2 from Escherichia coli (strain TW11681).